Reading from the N-terminus, the 315-residue chain is Bifunctional pinoresinol-lariciresinol reductase (315 aa).

NADP(+) contacts are provided by residues G14–G20, R39, and K48. Residue K142 is the Proton acceptor of the active site. Residue R146 coordinates NADP(+). H274 is a binding site for substrate.

The protein belongs to the NmrA-type oxidoreductase family. Isoflavone reductase subfamily. Dimer.

The enzyme catalyses (+)-lariciresinol + NADP(+) = (+)-pinoresinol + NADPH + H(+). It catalyses the reaction (-)-secoisolariciresinol + NADP(+) = (+)-lariciresinol + NADPH + H(+). Its function is as follows. Reductase involved in lignan (-)-hinokinin biosynthesis. Catalyzes the enantioselective conversion of (+)-pinoresinol into (+)-lariciresinol and of (+)-lariciresinol into (-)-secoisolariciresinol. Abstracts the 4R-hydride from the NADPH cofactor during catalysis. Has also a low phenylcoumaran benzylic ether reductase activity. The chain is Bifunctional pinoresinol-lariciresinol reductase (PLR_Lc1) from Linum corymbulosum (Linum).